The chain runs to 117 residues: Photosystem II reaction center Psb28 protein (117 aa).

It belongs to the Psb28 family. Part of the photosystem II complex.

It is found in the cellular thylakoid membrane. The protein is Photosystem II reaction center Psb28 protein of Prochlorococcus marinus (strain MIT 9515).